Consider the following 890-residue polypeptide: Translation initiation factor IF-2 (890 aa).

The disordered stretch occupies residues 45-304; the sequence is LIDHLNQKNS…LQQGFQKPAQ (260 aa). Polar residues predominate over residues 67 to 81; sequence STLNIPGTGGKSKSV. Basic and acidic residues predominate over residues 92-217; that stretch reads VKRDPQEAER…RMAEENKWTD (126 aa). Positions 252-266 are enriched in basic residues; the sequence is GRGRNAKAARPKKGN. A compositionally biased stretch (basic and acidic residues) spans 267–280; it reads KHAESKADREEARA. The tr-type G domain occupies 389–558; the sequence is PRAPVVTIMG…LLQAEVLELK (170 aa). The G1 stretch occupies residues 398-405; the sequence is GHVDHGKT. Residue 398–405 coordinates GTP; sequence GHVDHGKT. The interval 423 to 427 is G2; the sequence is GITQH. Residues 444–447 form a G3 region; it reads DTPG. GTP contacts are provided by residues 444–448 and 498–501; these read DTPGH and NKID. The interval 498 to 501 is G4; it reads NKID. The segment at 534–536 is G5; that stretch reads SAK. Lys808 is subject to N6-acetyllysine.

Belongs to the TRAFAC class translation factor GTPase superfamily. Classic translation factor GTPase family. IF-2 subfamily.

The protein localises to the cytoplasm. Its function is as follows. One of the essential components for the initiation of protein synthesis. Protects formylmethionyl-tRNA from spontaneous hydrolysis and promotes its binding to the 30S ribosomal subunits. Also involved in the hydrolysis of GTP during the formation of the 70S ribosomal complex. The sequence is that of Translation initiation factor IF-2 from Escherichia coli (strain SMS-3-5 / SECEC).